Reading from the N-terminus, the 292-residue chain is Glycine--tRNA ligase alpha subunit (292 aa).

It belongs to the class-II aminoacyl-tRNA synthetase family. In terms of assembly, tetramer of two alpha and two beta subunits.

The protein localises to the cytoplasm. The catalysed reaction is tRNA(Gly) + glycine + ATP = glycyl-tRNA(Gly) + AMP + diphosphate. This Synechococcus sp. (strain ATCC 27144 / PCC 6301 / SAUG 1402/1) (Anacystis nidulans) protein is Glycine--tRNA ligase alpha subunit.